The chain runs to 344 residues: UDP-N-acetylenolpyruvoylglucosamine reductase (344 aa).

Positions 17 to 187 constitute an FAD-binding PCMH-type domain; sequence VDYACSELIS…TGVGIKLAKK (171 aa). Arginine 163 is an active-site residue. Serine 233 acts as the Proton donor in catalysis. Residue glutamate 329 is part of the active site.

The protein belongs to the MurB family. FAD serves as cofactor.

Its subcellular location is the cytoplasm. It catalyses the reaction UDP-N-acetyl-alpha-D-muramate + NADP(+) = UDP-N-acetyl-3-O-(1-carboxyvinyl)-alpha-D-glucosamine + NADPH + H(+). It functions in the pathway cell wall biogenesis; peptidoglycan biosynthesis. Cell wall formation. The protein is UDP-N-acetylenolpyruvoylglucosamine reductase of Shewanella sediminis (strain HAW-EB3).